Consider the following 541-residue polypeptide: Circadian clock oscillator protein KaiC (541 aa).

A disordered region spans residues methionine 1–proline 40. KaiC domains follow at residues serine 21–phenylalanine 268 and valine 282–leucine 541. Over residues proline 26–glutamate 35 the composition is skewed to basic and acidic residues. ATP is bound by residues glycine 70, threonine 71, glycine 72, lysine 73, threonine 74, leucine 75, serine 110, lysine 245, leucine 246, arginine 247, threonine 249, histidine 251, threonine 261, threonine 311, glycine 312, threonine 313, glycine 314, lysine 315, and threonine 316. Threonine 74 serves as a coordination point for Mg(2+). Mg(2+)-binding residues include threonine 316 and glutamate 339. An ATP-binding site is contributed by tryptophan 352. Phosphoserine; by autocatalysis is present on serine 452. At threonine 453 the chain carries Phosphothreonine; by autocatalysis. 7 residues coordinate ATP: arginine 472, lysine 478, methionine 479, arginine 480, serine 482, histidine 484, and lysine 486.

It belongs to the KaiC family. As to quaternary structure, homohexamer; hexamerization is dependent on ATP-binding. The KaiABC complex composition changes during the circadian cycle to control KaiC phosphorylation. Complexes KaiC(6), KaiA(2-4):KaiC(6), KaiB(6):KaiC(6) and KaiC(6):KaiB(6):KaiA(12) are among the most important forms, many form cooperatively. KaiC interacts with SasA, activating its autokinase function and leading to RpaA activation. Mg(2+) serves as cofactor. In terms of processing, phosphorylated on serine and threonine residues by autocatalysis. Has a 4 step phosphorylation cycle; the autokinase acts first on Thr-453, then Ser-452. When Ser-452 is modified KaiC switches to an autophosphatase mode, acting first on phospho-Thr-453 then phospho-Ser-452.

It carries out the reaction L-seryl-[protein] + ATP = O-phospho-L-seryl-[protein] + ADP + H(+). The enzyme catalyses L-threonyl-[protein] + ATP = O-phospho-L-threonyl-[protein] + ADP + H(+). The catalysed reaction is ATP + H2O = ADP + phosphate + H(+). The interaction with KaiA enhances its phosphorylation status, while the interaction with KaiB decreases it. In terms of biological role, central component of the KaiABC oscillator complex, which constitutes the main circadian regulator in cyanobacteria. Complex composition changes during the circadian cycle to control KaiC phosphorylation. KaiA stimulates KaiC autophosphorylation, while KaiB sequesters KaiA, leading to KaiC autodephosphorylation. Clock output pathways impact the RpaA transcriptional regulator. KaiC enhances the autophosphorylation activity of SasA, which then transfers its phosphate group to RpaA to activate it. KaiB and KaiC together enhance the phospho-RpaA dephosphatase activity of CikA. Its function is as follows. Has a weak, temperature-independent ATPase activity; ATPase activity defines the circadian period. The phosphorylation state of KaiC modulates its ATPase activity and effects KaiB binding. This is Circadian clock oscillator protein KaiC from Parathermosynechococcus lividus (Thermostichus lividus).